The sequence spans 379 residues: Odorant receptor 23a (379 aa).

The Cytoplasmic segment spans residues 1–36; sequence MKLSETLKIDYFRVQLNAWRICGALDLSEGRYWSWS. A helical membrane pass occupies residues 37 to 57; it reads MLLCILVYLPTPMLLRGVYSF. Residues 58–64 are Extracellular-facing; it reads EDPVENN. An N-linked (GlcNAc...) asparagine glycan is attached at Asn64. Residues 65–85 form a helical membrane-spanning segment; sequence FSLSLTVTSLSNLMKFCMYVA. The Cytoplasmic portion of the chain corresponds to 86–125; that stretch reads QLTKMVEVQSLIGQLDARVSGESQSERHRNMTEHLLRMSK. The chain crosses the membrane as a helical span at residues 126 to 146; sequence LFQITYAVVFIIAAVPFVFET. At 147–162 the chain is on the extracellular side; sequence ELSLPMPMWFPFDWKN. The helical transmembrane segment at 163–183 threads the bilayer; sequence SMVAYIGALVFQEIGYVFQIM. Topologically, residues 184–253 are cytoplasmic; it reads QCFAADSFPP…TKSLVSYPMM (70 aa). A helical membrane pass occupies residues 254–274; sequence VQFMVIGINIAITLFVLIFYV. The Extracellular segment spans residues 275–280; sequence ETLYDR. A helical transmembrane segment spans residues 281–301; that stretch reads IYYLCFLLGITVQTYPLCYYG. The Cytoplasmic portion of the chain corresponds to 302-340; it reads TMVQESFAELHYAVFCSNWVDQSASYRGHMLILAERTKR. A helical membrane pass occupies residues 341 to 361; that stretch reads MQLLLAGNLVPIHLSTYVACW. The Extracellular portion of the chain corresponds to 362 to 379; the sequence is KGAYSFFTLMADRDGLGS.

This sequence belongs to the insect chemoreceptor superfamily. Heteromeric odorant receptor channel (TC 1.A.69) family. Or2a subfamily. In terms of assembly, interacts with Orco. Complexes exist early in the endomembrane system in olfactory sensory neurons (OSNs), coupling these complexes to the conserved ciliary trafficking pathway. As to expression, expressed in 10-40 sensory cells in the third antenna segment and in the maxillary palp.

The protein resides in the cell membrane. Functionally, odorant receptor which mediates acceptance or avoidance behavior, depending on its substrates. The odorant receptor repertoire encodes a large collection of odor stimuli that vary widely in identity, intensity, and duration. May form a complex with Orco to form odorant-sensing units, providing sensitive and prolonged odorant signaling and calcium permeability. This is Odorant receptor 23a (Or23a) from Drosophila melanogaster (Fruit fly).